Consider the following 176-residue polypeptide: Secreted LysM effector ELP2 (176 aa).

The first 18 residues, 1–18, serve as a signal peptide directing secretion; it reads MQFSIFTVLAAAASFAVA. Residues 31–45 show a composition bias toward low complexity; that stretch reads TSAAANPSPTTSGAA. Residues 31-50 are disordered; the sequence is TSAAANPSPTTSGAANPSPT. A LysM 1 domain is found at 58–102; sequence HKTTVKAGQTLTTIAERFHSGICDIAWQNKLENPNVIFVGQVLLV. Residue N111 is glycosylated (N-linked (GlcNAc...) asparagine). In terms of domain architecture, LysM 2 spans 129 to 173; sequence ATYTIKSGDTFFAVAQSLGITTDSLTGANPGVVPENLQIDQVINV.

It belongs to the secreted LysM effector family. In terms of assembly, forms homodimers in a chitin-independent manner through interactions at the N-termini of EPL2 monomers. Homodimers are further polymerized in a chitin-dependent manner.

The protein localises to the secreted. Secreted effector that enables the plant pathogenic fungus to manipulate host defenses for successful infection. Binds chitin oligomers and polymer with high affinity and plays a dual role, not only in the suppression of chitin-triggered immune responses, but also in appressorium function. Does not protect fungal hyphae against plant chitinases but suppresses chitin-triggered plant immune responses. Chitin-induced polymerization of homodimers forms a contiguous ELP2 highly oligomeric super-complexe that may precipitate at infection sites to eliminate chitin oligomers, and thus suppress the activation of chitin-induced plant immunity. The polypeptide is Secreted LysM effector ELP2 (Colletotrichum higginsianum (strain IMI 349063) (Crucifer anthracnose fungus)).